A 117-amino-acid chain; its full sequence is Large ribosomal subunit protein uL24 (117 aa).

A compositionally biased stretch (basic residues) spans 1–10; the sequence is MSKQPRKQRK. The disordered stretch occupies residues 1–28; it reads MSKQPRKQRKALYTAPLHKRHNSMSVHL.

This sequence belongs to the universal ribosomal protein uL24 family. In terms of assembly, part of the 50S ribosomal subunit.

One of two assembly initiator proteins, it binds directly to the 5'-end of the 23S rRNA, where it nucleates assembly of the 50S subunit. Functionally, located at the polypeptide exit tunnel on the outside of the subunit. The sequence is that of Large ribosomal subunit protein uL24 from Methanosphaera stadtmanae (strain ATCC 43021 / DSM 3091 / JCM 11832 / MCB-3).